Reading from the N-terminus, the 153-residue chain is Pheromone-binding protein Gp-9 (153 aa).

An N-terminal signal peptide occupies residues 1–19 (MKTFVLHIFIFALVAFASA). 3 disulfide bridges follow: cysteine 37/cysteine 77, cysteine 73/cysteine 129, and cysteine 118/cysteine 138.

The protein belongs to the PBP/GOBP family. Homodimer.

Its subcellular location is the secreted. In terms of biological role, colony queen number, a major feature of social organization, is associated with worker genotype for Gp-9. Colonies are headed by either a single reproductive queen (monogyne form) or multiple queens (polygyne form). Differences in worker Gp-9 genotypes between social forms may cause differences in workers' abilities to recognize queens and regulate their numbers. The chain is Pheromone-binding protein Gp-9 from Solenopsis pusillignis (Fire ant).